Reading from the N-terminus, the 265-residue chain is Polyphosphate glucokinase (265 aa).

Positions 1-18 (MTSTGPETSETPGATTQR) are enriched in polar residues. The disordered stretch occupies residues 1–22 (MTSTGPETSETPGATTQRHGFG). An ATP-binding site is contributed by 24-29 (DVGGSG).

It belongs to the ROK (NagC/XylR) family. Homodimer.

The catalysed reaction is [phosphate](n) + D-glucose = [phosphate](n-1) + D-glucose 6-phosphate + H(+). It carries out the reaction D-glucose + ATP = D-glucose 6-phosphate + ADP + H(+). Its function is as follows. Catalyzes the phosphorylation of glucose using polyphosphate or ATP as the phosphoryl donor. Polyphosphate, rather than ATP, seems to be the major phosphate donor for the enzyme in M.tuberculosis. GTP, UTP and CTP can replace ATP as phosphoryl donor. This Mycobacterium tuberculosis (strain ATCC 25177 / H37Ra) protein is Polyphosphate glucokinase (ppgK).